Reading from the N-terminus, the 605-residue chain is Sorting nexin MVP1 (605 aa).

Disordered stretches follow at residues 113–147 (PMDF…LDDH) and 175–213 (EEQE…SGVW). Positions 123 to 138 (SSINFSASTTGRSQTP) are enriched in polar residues. The segment covering 180 to 193 (LQQSQLSQSQLSRS) has biased composition (low complexity). The PX domain occupies 226-343 (ADSVTLAIVP…TFVTLRNDIS (118 aa)). A 1,2-diacyl-sn-glycero-3-phospho-(1D-myo-inositol-3-phosphate) is bound by residues arginine 264, serine 266, lysine 290, and arginine 309.

The protein belongs to the sorting nexin family.

Its subcellular location is the cytoplasm. The protein resides in the membrane. In terms of biological role, required for vacuolar protein sorting. The protein is Sorting nexin MVP1 (MVP1) of Yarrowia lipolytica (strain CLIB 122 / E 150) (Yeast).